The chain runs to 154 residues: Protein X (154 aa).

Residues 68-117 (PCALRFTSARSMETTVNAHQVLPKVLHKRTLGLSAMSTTDLEAYFKDCLF) are mitochondrial targeting sequence.

The protein belongs to the orthohepadnavirus protein X family. May form homodimer. May interact with host CEBPA, CFLAR, CREB1, DDB1, E4F1, HBXIP, HSPD1/HSP60, NFKBIA, POLR2E and SMAD4. Interacts with host SMC5-SMC6 complex and induces its degradation. Interacts with host TRPC4AP; leading to prevent ubiquitination of TRPC4AP. Interacts with host PLSCR1; this interaction promotes ubiquitination and degradation of HBx and impairs HBx-mediated cell proliferation. Post-translationally, a fraction may be phosphorylated in insect cells and HepG2 cells, a human hepatoblastoma cell line. Phosphorylated in vitro by host protein kinase C or mitogen-activated protein kinase. N-acetylated in insect cells.

The protein localises to the host cytoplasm. It is found in the host nucleus. Its subcellular location is the host mitochondrion. Functionally, multifunctional protein that plays a role in silencing host antiviral defenses and promoting viral transcription. Does not seem to be essential for HBV infection. May be directly involved in development of cirrhosis and liver cancer (hepatocellular carcinoma). Most of cytosolic activities involve modulation of cytosolic calcium. The effect on apoptosis is controversial depending on the cell types in which the studies have been conducted. May induce apoptosis by localizing in mitochondria and causing loss of mitochondrial membrane potential. May also modulate apoptosis by binding host CFLAR, a key regulator of the death-inducing signaling complex (DISC). Promotes viral transcription by using the host E3 ubiquitin ligase DDB1 to target the SMC5-SMC6 complex to proteasomal degradation. This host complex would otherwise bind to viral episomal DNA, and prevents its transcription. Moderately stimulates transcription of many different viral and cellular transcription elements. Promoters and enhancers stimulated by HBx contain DNA binding sites for NF-kappa-B, AP-1, AP-2, c-EBP, ATF/CREB, or the calcium-activated factor NF-AT. The protein is Protein X of Homo sapiens (Human).